The following is a 622-amino-acid chain: DNA-directed RNA polymerase subunit gamma (622 aa).

Residues C70, C72, C85, and C88 each coordinate Zn(2+). Mg(2+) contacts are provided by D466, D468, and D470.

Belongs to the RNA polymerase beta' chain family. RpoC1 subfamily. In cyanobacteria the RNAP catalytic core is composed of 2 alpha, 1 beta, 1 beta', 1 gamma and 1 omega subunit. When a sigma factor is associated with the core the holoenzyme is formed, which can initiate transcription. Mg(2+) serves as cofactor. The cofactor is Zn(2+).

It carries out the reaction RNA(n) + a ribonucleoside 5'-triphosphate = RNA(n+1) + diphosphate. DNA-dependent RNA polymerase catalyzes the transcription of DNA into RNA using the four ribonucleoside triphosphates as substrates. In Cyanothece sp. (strain PCC 7425 / ATCC 29141), this protein is DNA-directed RNA polymerase subunit gamma.